The following is a 500-amino-acid chain: Probable cytosol aminopeptidase (500 aa).

The Mn(2+) site is built by Lys-264 and Asp-269. Lys-276 is an active-site residue. Asp-287, Asp-346, and Glu-348 together coordinate Mn(2+). Arg-350 is an active-site residue.

Belongs to the peptidase M17 family. Mn(2+) is required as a cofactor.

The protein resides in the cytoplasm. The catalysed reaction is Release of an N-terminal amino acid, Xaa-|-Yaa-, in which Xaa is preferably Leu, but may be other amino acids including Pro although not Arg or Lys, and Yaa may be Pro. Amino acid amides and methyl esters are also readily hydrolyzed, but rates on arylamides are exceedingly low.. It catalyses the reaction Release of an N-terminal amino acid, preferentially leucine, but not glutamic or aspartic acids.. Functionally, presumably involved in the processing and regular turnover of intracellular proteins. Catalyzes the removal of unsubstituted N-terminal amino acids from various peptides. The protein is Probable cytosol aminopeptidase of Rhodopseudomonas palustris (strain TIE-1).